The following is a 407-amino-acid chain: POC1 centriolar protein homolog A (407 aa).

WD repeat units follow at residues 17–56 (GHRDAVTSVDFSLNTKQLASGSMDSCLMVWHMKPQTRAYR), 59–98 (GHKDAVTCVNFSPSGHLLASGSRDKTVRIWVPNVKGESTV), 101–140 (AHTATVRSVHFCSDGQSFVTASDDKTVKVWSTHRQKFLFS), 143–182 (QHINWVRCAKFSPDGRLIVSASDDKTVKLWDKTSRECVHS), 185–224 (EHGGFVTYVDFHPSGTCIAAAGMDNTVKVWDVRTHRLLQH), 227–266 (LHSAAVNALSFHPSGNYLVTASSDSTLKILDLMEGRLLYT), and 269–308 (GHQGPATTVAFSRTGEYFASGGSDEQVMVWKSNFDIVDYG). The tract at residues 317–357 (PATRASSSGTLPEVDPLVPPGRGRSQESMQSHSQEPVSVPQ) is disordered. Residues 342-357 (QESMQSHSQEPVSVPQ) are compositionally biased toward polar residues. Residues 369–397 (QLDVLTQTVSILEQRLTLTEDKLKQCLEN) are a coiled coil.

This sequence belongs to the WD repeat POC1 family. In terms of assembly, interacts with POC1B.

It localises to the cytoplasm. Its subcellular location is the cytoskeleton. It is found in the microtubule organizing center. The protein resides in the centrosome. The protein localises to the centriole. It localises to the cilium basal body. Its subcellular location is the spindle pole. Its function is as follows. Plays an important role in centriole assembly and/or stability and ciliogenesis. Involved in early steps of centriole duplication, as well as in the later steps of centriole length control. Acts in concert with POC1B to ensure centriole integrity and proper mitotic spindle formation. In Bos taurus (Bovine), this protein is POC1 centriolar protein homolog A (POC1A).